The primary structure comprises 408 residues: Putative gustatory receptor 58b (408 aa).

The Cytoplasmic portion of the chain corresponds to 1-44; sequence MLHPKLGRVMNVVYYHSVVFALMSTTLRIRSCRKCLRLEKVSRT. Residues 45–65 traverse the membrane as a helical segment; sequence YTIYSFFVGIFLFLNLYFMVP. Residues 66–82 lie on the Extracellular side of the membrane; that stretch reads RIMEDGYMKYNIVLQWN. The chain crosses the membrane as a helical span at residues 83–103; the sequence is FFVMLFLRAIAVVSCYGTLWL. Topologically, residues 104 to 150 are cytoplasmic; the sequence is KRHKIIQLYKYSLIYWKRFGHITRAIVDKKELLDLQESLARIMIRKI. Residues 151–171 traverse the membrane as a helical segment; the sequence is ILLYSAFLCSTVLQYQLLSVI. The Extracellular portion of the chain corresponds to 172–193; it reads NPQIFLAFCARLTHFLHFLCVK. Residues 194–214 form a helical membrane-spanning segment; that stretch reads MGFFGVLVLLNHQFLVIHLAI. The Cytoplasmic segment spans residues 215 to 245; it reads NALHGRKARKKWKALRSVAAMHLKTLRLARR. Residues 246–266 traverse the membrane as a helical segment; the sequence is IFDMFDIANATVFINMFMTAI. At 267 to 284 the chain is on the extracellular side; the sequence is NILYHAVQYSNSSIKSNG. Asn-277 carries an N-linked (GlcNAc...) asparagine glycan. A helical transmembrane segment spans residues 285–305; the sequence is WGILFGNGLIVFNFWGTMALM. Topologically, residues 306–364 are cytoplasmic; the sequence is EMLDSVVTSCNNTGQQLRQLSDLPKVGPKMQRELDVFTMQLRQNRLVYKICGIVELDKP. A helical membrane pass occupies residues 365–385; sequence ACLSYIGSILSNVIILMQFDL. At 386-408 the chain is on the extracellular side; sequence RRQRQPINDRQYLIHLMKNKTKV. N-linked (GlcNAc...) asparagine glycosylation occurs at Asn-404.

The protein belongs to the insect chemoreceptor superfamily. Gustatory receptor (GR) family. Gr22e subfamily. In terms of tissue distribution, expressed in the adult labellar chemosensory neurons, labral sense organ and thorax. In larvae, is in neurons of the terminal external chemosensory organ as well as in the dorsal pharyngeal sense organ.

It localises to the cell membrane. In terms of biological role, probable gustatory receptor which mediates acceptance or avoidance behavior, depending on its substrates. The sequence is that of Putative gustatory receptor 58b (Gr58b) from Drosophila melanogaster (Fruit fly).